The chain runs to 1697 residues: MTGAPPYNPQSPTQQSRYPVYSPPAKSRPYYANNEQYQQHPPQTPPAFSSRSPHFSHAPSPLPGTLPPLNGAAPPSSHPSEPPSQYQAHSSAGNPQFALPRPYPGSVLSGNGASPYGHSTPSHAHPAGRPDSHPQTSPKKESESQFPMSTHGVMGYPSSVVREPRASSPPKDVKPTRAADPMSFASILSGPTEERAPPPRQSSAEATPTPLAPAATAQTSLSPPPVASAATSQKSKDRAPALTASLPRLEKKPTTEKRRRNPPETEQKTADSRTSNVANGVSEPSKTLAQPRGAGSRPVMSERETEALNKALADMAEADKSDVEAPGYDRFREEYRAKGKKRAFATEQAEILRRKRRRNDFLVKLSKSLEKQATAGMDRFRYANEASVVAEVQAKEIQDEKERKKDMQRKRRRENTVRMEMQKKKEAEAKAHEAQDSAEKAKFLREAERAQRKIKTTKRALEGITAPEEISEVTPLAPNLEGGTTSSFHIGRGSPSRRKSGRGGPVTRPKKSKEQKQAEKDAAEAAYAAMENDEPLPIAPKEDPRKESLKKEVKGGRSKEPTPTPLSAYETKGYNQIYEQIWRDIARKDIPKVYRIKALSLSTRQENLRKTAQLASKQSRKWQERTNKSMKDTQARAKRTMREMMSFWKRNEREERDLRRLAEKQEIESAKKAEAEREANRQRRKLNFLISQTELYSHFIGRKIKGAEGDAAGDTAVEATGETVQPGKGQDHTIDMPSSVADAGTKVTNFEDLDFDAEDETALRQAAMANAQNAVQEAQDRARAFNSGQNQMDALDEGELNFQNPTSLGDIEISQPNMLTAKLKEYQLKGLNWLVNLYEQGINGILADEMGLGKTIQSISVMAYLAEVHNIWGPFLVIAPASTLHNWQQEITKFVPDIKVLPYWGSAKDRKILRKFWDRKHITYTKESEFHVLVTSYQLVVLDAQYFQKVKWQYMILDEAQAIKSSQSSRWKNLLGFHCRNRLLLTGTPIQNNMQELWALLHFIMPTLFDSHDEFSEWFSKDIESHAQSNTKLNEDQLRRLHMILKPFMLRRVKKHVQQELGDKVEKDIFCDLTYRQRAYYTNLRNRVSIMDLIEKAAVGDEADSTTLMNLVMQFRKVCNHPDLFERAETKSPFSTAYFAETASFVREGNNVDVRYSTRNLIEYPMPRLLCGAGGRVDVAGAENPHAGFRGRYLNHLMNIFTPENMKQSIQDDGAFSFLRFVDTSLGEAYEQSHLGIFERAVRRRGQVNRLSRLNVAYDDDKELAGSALPHTLFNIVDRNDKHAVNEVAAEGIMRDLMTVSQSTYEREGLNIIEPCVSPAASAPPISVVSSSHIPSIETRDTLFNVSVRHALYSTPSRQVDEQIIEKKVDPTPYSLAPMLPKPISAKGRYTHIEVPSMRRFVTDSGKLAKLDELLRELKAGGHRVLLYFQMTRMIDLMEEYLTYRNYKYCRLDGSTKLEDRRDTVADFQQRPEIFVFLLSTRAGGLGINLTAADTVIFYDSDWNPTIDSQAMDRAHRLGQTRQVTVYRLITRGTIEERIRKRALQKEEVQRVVITGGAAGGVDFNTRNRESRTKDIAMWLADDEQAELIEQKEKEALDRGEVFGAGKGGKKAAQKRKKDITLDDMYHEGEGNFDDASAKPSGAATPVSTAENVGTPSSTPAPKRGRGRGSGKGTSKRAKTTKERLRLIDGDGGLGPS.

Disordered stretches follow at residues 1 to 324, 398 to 569, and 615 to 637; these read MTGA…SDVE, QDEK…LSAY, and ASKQ…QARA. Polar residues-rich tracts occupy residues 33 to 53, 85 to 94, and 108 to 122; these read NNEQ…SRSP, QYQAHSSAGN, and LSGN…STPS. The segment covering 128–143 has biased composition (basic and acidic residues); it reads GRPDSHPQTSPKKESE. Low complexity predominate over residues 202–221; sequence SSAEATPTPLAPAATAQTSL. Basic and acidic residues predominate over residues 248–271; the sequence is RLEKKPTTEKRRRNPPETEQKTAD. The span at 272–288 shows a compositional bias: polar residues; the sequence is SRTSNVANGVSEPSKTL. Residues 383–466 adopt a coiled-coil conformation; it reads ANEASVVAEV…TKRALEGITA (84 aa). 4 stretches are compositionally biased toward basic and acidic residues: residues 414–451, 512–523, 540–560, and 621–635; these read ENTV…ERAQ, SKEQKQAEKDAA, PKED…RSKE, and KWQE…DTQA. The 126-residue stretch at 581 to 706 folds into the DBINO domain; the sequence is IWRDIARKDI…SHFIGRKIKG (126 aa). The stretch at 623–694 forms a coiled coil; that stretch reads QERTNKSMKD…KLNFLISQTE (72 aa). The Helicase ATP-binding domain maps to 835 to 1007; it reads VNLYEQGING…WALLHFIMPT (173 aa). 848 to 855 lines the ATP pocket; the sequence is DEMGLGKT. The short motif at 958-961 is the DEAQ box element; the sequence is DEAQ. A Helicase C-terminal domain is found at 1410 to 1570; the sequence is KLDELLRELK…GVDFNTRNRE (161 aa). Residues 1626-1697 are disordered; sequence YHEGEGNFDD…IDGDGGLGPS (72 aa). Polar residues predominate over residues 1646–1658; that stretch reads PVSTAENVGTPSS. The span at 1663–1679 shows a compositional bias: basic residues; it reads KRGRGRGSGKGTSKRAK. Basic and acidic residues predominate over residues 1680-1689; sequence TTKERLRLID.

It belongs to the SNF2/RAD54 helicase family. As to quaternary structure, component of the INO80 chromatin-remodeling complex.

The protein localises to the nucleus. The catalysed reaction is ATP + H2O = ADP + phosphate + H(+). Its function is as follows. ATPase component of the INO80 complex which remodels chromatin by shifting nucleosomes and is involved in DNA repair. The polypeptide is Chromatin-remodeling ATPase INO80 (ino80) (Aspergillus niger (strain ATCC MYA-4892 / CBS 513.88 / FGSC A1513)).